The primary structure comprises 87 residues: Large ribosomal subunit protein bL27 (87 aa).

The protein belongs to the bacterial ribosomal protein bL27 family.

The sequence is that of Large ribosomal subunit protein bL27 from Phocaeicola vulgatus (strain ATCC 8482 / DSM 1447 / JCM 5826 / CCUG 4940 / NBRC 14291 / NCTC 11154) (Bacteroides vulgatus).